The primary structure comprises 217 residues: Phosphoenolpyruvate guanylyltransferase (217 aa).

Residues Thr150, Gly165, and Ser168 each coordinate phosphoenolpyruvate.

The protein belongs to the CofC family.

The catalysed reaction is phosphoenolpyruvate + GTP + H(+) = enolpyruvoyl-2-diphospho-5'-guanosine + diphosphate. The protein operates within cofactor biosynthesis; coenzyme F420 biosynthesis. Functionally, guanylyltransferase that catalyzes the activation of phosphoenolpyruvate (PEP) as enolpyruvoyl-2-diphospho-5'-guanosine, via the condensation of PEP with GTP. It is involved in the biosynthesis of coenzyme F420, a hydride carrier cofactor. The protein is Phosphoenolpyruvate guanylyltransferase of Mycobacterium ulcerans (strain Agy99).